Reading from the N-terminus, the 66-residue chain is DNA-directed RNA polymerase subunit omega (66 aa).

It belongs to the RNA polymerase subunit omega family. In terms of assembly, the RNAP catalytic core consists of 2 alpha, 1 beta, 1 beta' and 1 omega subunit. When a sigma factor is associated with the core the holoenzyme is formed, which can initiate transcription.

It catalyses the reaction RNA(n) + a ribonucleoside 5'-triphosphate = RNA(n+1) + diphosphate. In terms of biological role, promotes RNA polymerase assembly. Latches the N- and C-terminal regions of the beta' subunit thereby facilitating its interaction with the beta and alpha subunits. This Clostridium botulinum (strain Eklund 17B / Type B) protein is DNA-directed RNA polymerase subunit omega.